The primary structure comprises 257 residues: Ribonuclease HII (257 aa).

The region spanning 72 to 257 (TYIAGIDEVG…FAPIKDMIQK (186 aa)) is the RNase H type-2 domain. A divalent metal cation is bound by residues Asp78, Glu79, and Asp170.

Belongs to the RNase HII family. Mn(2+) serves as cofactor. The cofactor is Mg(2+).

Its subcellular location is the cytoplasm. It catalyses the reaction Endonucleolytic cleavage to 5'-phosphomonoester.. Functionally, endonuclease that specifically degrades the RNA of RNA-DNA hybrids. The protein is Ribonuclease HII of Bacillus cereus (strain ATCC 10987 / NRS 248).